The sequence spans 313 residues: Protein-methionine-sulfoxide reductase catalytic subunit MsrP (313 aa).

Residues 1–44 (MARWRPDMAEREATPEALYLRRRDFLALGAAGAVGLLLPRGARA) constitute a signal peptide (tat-type signal). Mo-molybdopterin-binding positions include Asn-76, 79–80 (YE), Cys-134, Thr-169, Asn-217, Arg-222, and 233–235 (GAK).

This sequence belongs to the MsrP family. As to quaternary structure, heterodimer of a catalytic subunit (MsrP) and a heme-binding subunit (MsrQ). It depends on Mo-molybdopterin as a cofactor. Predicted to be exported by the Tat system. The position of the signal peptide cleavage has not been experimentally proven.

The protein localises to the periplasm. The enzyme catalyses L-methionyl-[protein] + a quinone + H2O = L-methionyl-(S)-S-oxide-[protein] + a quinol. The catalysed reaction is L-methionyl-[protein] + a quinone + H2O = L-methionyl-(R)-S-oxide-[protein] + a quinol. Functionally, part of the MsrPQ system that repairs oxidized periplasmic proteins containing methionine sulfoxide residues (Met-O), using respiratory chain electrons. Thus protects these proteins from oxidative-stress damage caused by reactive species of oxygen and chlorine generated by the host defense mechanisms. MsrPQ is essential for the maintenance of envelope integrity under bleach stress, rescuing a wide series of structurally unrelated periplasmic proteins from methionine oxidation. The catalytic subunit MsrP is non-stereospecific, being able to reduce both (R-) and (S-) diastereoisomers of methionine sulfoxide. The sequence is that of Protein-methionine-sulfoxide reductase catalytic subunit MsrP from Anaeromyxobacter dehalogenans (strain 2CP-1 / ATCC BAA-258).